Reading from the N-terminus, the 965-residue chain is Phosphatidylethanolamine N-methyltransferase (965 aa).

The Lumenal segment spans residues 1–82 (MDRGLSTGTN…SPSEPKNLSD (82 aa)). The interval 34–54 (PTVTNASNGKDKAGKTFGRTP) is disordered. Residues 83–103 (LVVLTILAGHIFLLWILPSGA) form a helical membrane-spanning segment. Residues 104-106 (KIP) are Cytoplasmic-facing. Residues 107 to 127 (VFAVIYLFWRSCYNAGIGWLL) form a helical membrane-spanning segment. Residues 128–192 (HNQSHHKTLV…EYNTWLVFRR (65 aa)) lie on the Lumenal side of the membrane. Residues 193–213 (LVDLILMCDFASYCLFAIACS) traverse the membrane as a helical segment. Residues 214–220 (RHPANES) are Cytoplasmic-facing. The helical transmembrane segment at 221–241 (VLMTVIRWTSGIALVLFNLWV) threads the bilayer. Residues 242-274 (KLDAHRVVKDYAWYWGDFFYLIDQELTFDGVFE) lie on the Lumenal side of the membrane. The chain crosses the membrane as a helical span at residues 275-295 (MAPHPMYSVGYAGYYGISLMA). Residues 296-297 (AS) are Cytoplasmic-facing. The chain crosses the membrane as a helical span at residues 298 to 318 (YKVLFISIIAHAAQFAFLVLV). The Lumenal portion of the chain corresponds to 319–394 (ENPHIDKTYN…LDLHRITDTS (76 aa)). Residues 326 to 368 (TYNPPPPRKRTITEHDAASQRSQSPDTPNAPSVSEENVPNATT) are disordered. The span at 344 to 368 (SQRSQSPDTPNAPSVSEENVPNATT) shows a compositional bias: polar residues. Residues 395-415 (SILVQFLMFSLTVLTPSTPWY) traverse the membrane as a helical segment. Q416 is a topological domain (cytoplasmic). Residues 417-437 (FLFVANAAIWRLWYSVGIGYL) form a helical membrane-spanning segment. Topologically, residues 438-470 (LNRQSNCKSWTRHFVKYGETPHEAWNQWKGTYH) are lumenal. The chain crosses the membrane as a helical span at residues 471 to 491 (LSMVMCYASFISAVWKMYTLP). Topologically, residues 492–503 (SNWGYGLAILRH) are cytoplasmic. Residues 504–524 (VLGAGLISLQIWTSVSIYESL) form a helical membrane-spanning segment. Residues 525–559 (GEFGWFYGDFFFDESPKLTYNGIYRFLNNPERVLG) lie on the Lumenal side of the membrane. The helical transmembrane segment at 560–580 (LAGVWGAVLITASGTVAFLAF) threads the bilayer. The Cytoplasmic portion of the chain corresponds to 581–965 (LSHILSLGFI…GATTPTESKE (385 aa)).

It belongs to the class VI-like SAM-binding methyltransferase superfamily. CHO2 family.

The protein localises to the endoplasmic reticulum membrane. It carries out the reaction a 1,2-diacyl-sn-glycero-3-phosphoethanolamine + S-adenosyl-L-methionine = a 1,2-diacyl-sn-glycero-3-phospho-N-methylethanolamine + S-adenosyl-L-homocysteine + H(+). It functions in the pathway phospholipid metabolism; phosphatidylcholine biosynthesis. In terms of biological role, catalyzes the first step of the methylation pathway of phosphatidylcholine biosynthesis, the SAM-dependent methylation of phosphatidylethanolamine (PE) to phosphatidylmonomethylethanolamine (PMME). The polypeptide is Phosphatidylethanolamine N-methyltransferase (Emericella nidulans (strain FGSC A4 / ATCC 38163 / CBS 112.46 / NRRL 194 / M139) (Aspergillus nidulans)).